The primary structure comprises 260 residues: Type III pantothenate kinase (260 aa).

6 to 13 (DSGNTNIV) provides a ligand contact to ATP. Substrate is bound at residue 108–111 (GADR). D110 functions as the Proton acceptor in the catalytic mechanism. A K(+)-binding site is contributed by D130. Residue T133 coordinates ATP. T185 is a binding site for substrate.

This sequence belongs to the type III pantothenate kinase family. In terms of assembly, homodimer. The cofactor is NH4(+). K(+) is required as a cofactor.

It is found in the cytoplasm. The catalysed reaction is (R)-pantothenate + ATP = (R)-4'-phosphopantothenate + ADP + H(+). It functions in the pathway cofactor biosynthesis; coenzyme A biosynthesis; CoA from (R)-pantothenate: step 1/5. Catalyzes the phosphorylation of pantothenate (Pan), the first step in CoA biosynthesis. The chain is Type III pantothenate kinase from Paramagnetospirillum magneticum (strain ATCC 700264 / AMB-1) (Magnetospirillum magneticum).